A 330-amino-acid chain; its full sequence is GTPase Obg (330 aa).

In terms of domain architecture, Obg spans 1–159 (MNFIDEVKIC…MWIHLSLKLL (159 aa)). In terms of domain architecture, OBG-type G spans 160 to 327 (SDVGLVGLPN…IVKLALKTIK (168 aa)). GTP is bound by residues 166–173 (GLPNAGKS), 191–195 (FTTLV), 212–215 (DIPG), 279–282 (NKCD), and 308–310 (STY). Mg(2+) contacts are provided by Ser-173 and Thr-193.

This sequence belongs to the TRAFAC class OBG-HflX-like GTPase superfamily. OBG GTPase family. As to quaternary structure, monomer. Requires Mg(2+) as cofactor.

It is found in the cytoplasm. Functionally, an essential GTPase which binds GTP, GDP and possibly (p)ppGpp with moderate affinity, with high nucleotide exchange rates and a fairly low GTP hydrolysis rate. Plays a role in control of the cell cycle, stress response, ribosome biogenesis and in those bacteria that undergo differentiation, in morphogenesis control. The sequence is that of GTPase Obg from Rickettsia felis (strain ATCC VR-1525 / URRWXCal2) (Rickettsia azadi).